Reading from the N-terminus, the 282-residue chain is Protein DOG1-like 3 (282 aa).

The 244-residue stretch at 11-254 folds into the DOG1 domain; the sequence is EQLQKGCYYE…HEWGRVREEQ (244 aa).

The protein is Protein DOG1-like 3 of Arabidopsis thaliana (Mouse-ear cress).